A 305-amino-acid chain; its full sequence is Methionyl-tRNA formyltransferase (305 aa).

108-111 (SLLP) contributes to the (6S)-5,6,7,8-tetrahydrofolate binding site.

Belongs to the Fmt family.

It catalyses the reaction L-methionyl-tRNA(fMet) + (6R)-10-formyltetrahydrofolate = N-formyl-L-methionyl-tRNA(fMet) + (6S)-5,6,7,8-tetrahydrofolate + H(+). Its function is as follows. Attaches a formyl group to the free amino group of methionyl-tRNA(fMet). The formyl group appears to play a dual role in the initiator identity of N-formylmethionyl-tRNA by promoting its recognition by IF2 and preventing the misappropriation of this tRNA by the elongation apparatus. The chain is Methionyl-tRNA formyltransferase from Thermus thermophilus (strain ATCC BAA-163 / DSM 7039 / HB27).